Here is a 270-residue protein sequence, read N- to C-terminus: Orotidine 5'-phosphate decarboxylase (270 aa).

Catalysis depends on Lys95, which acts as the Proton donor.

Belongs to the OMP decarboxylase family. Type 2 subfamily.

It carries out the reaction orotidine 5'-phosphate + H(+) = UMP + CO2. It functions in the pathway pyrimidine metabolism; UMP biosynthesis via de novo pathway; UMP from orotate: step 2/2. The chain is Orotidine 5'-phosphate decarboxylase from Azoarcus sp. (strain BH72).